Consider the following 554-residue polypeptide: D-3-phosphoglycerate dehydrogenase (554 aa).

NAD(+)-binding positions include 177 to 178 (KI), aspartate 197, 256 to 258 (CSR), and aspartate 282. Arginine 258 is an active-site residue. Residue glutamate 287 is part of the active site. Catalysis depends on histidine 305, which acts as the Proton donor. 305 to 308 (HLGA) contacts NAD(+). Residues 482-554 (MLFTLHRDMP…GIRDAYTVKL (73 aa)) form the ACT domain.

The protein belongs to the D-isomer specific 2-hydroxyacid dehydrogenase family.

It carries out the reaction (2R)-3-phosphoglycerate + NAD(+) = 3-phosphooxypyruvate + NADH + H(+). The catalysed reaction is (R)-2-hydroxyglutarate + NAD(+) = 2-oxoglutarate + NADH + H(+). It functions in the pathway amino-acid biosynthesis; L-serine biosynthesis; L-serine from 3-phospho-D-glycerate: step 1/3. In terms of biological role, catalyzes the reversible oxidation of 3-phospho-D-glycerate to 3-phosphonooxypyruvate, the first step of the phosphorylated L-serine biosynthesis pathway. Also catalyzes the reversible oxidation of 2-hydroxyglutarate to 2-oxoglutarate. This chain is D-3-phosphoglycerate dehydrogenase (serA), found in Synechocystis sp. (strain ATCC 27184 / PCC 6803 / Kazusa).